The chain runs to 399 residues: Endo-1,4-beta-xylanase C (399 aa).

The N-terminal stretch at Met-1 to Ala-20 is a signal peptide. One can recognise a CBM1 domain in the interval Gln-21 to Leu-56. Residues Ser-81–Gly-396 enclose the GH10 domain. The active-site Proton donor is Glu-212. The Nucleophile role is filled by Glu-318. Residues Cys-346 and Cys-352 are joined by a disulfide bond.

The protein belongs to the glycosyl hydrolase 10 (cellulase F) family.

Its subcellular location is the secreted. The catalysed reaction is Endohydrolysis of (1-&gt;4)-beta-D-xylosidic linkages in xylans.. It participates in glycan degradation; xylan degradation. In terms of biological role, endo-1,4-beta-xylanase involved in the hydrolysis of xylan, a major structural heterogeneous polysaccharide found in plant biomass representing the second most abundant polysaccharide in the biosphere, after cellulose. The chain is Endo-1,4-beta-xylanase C (xynC) from Phanerodontia chrysosporium (White-rot fungus).